A 223-amino-acid chain; its full sequence is Ribosomal RNA small subunit methyltransferase G (223 aa).

The S-adenosyl-L-methionine site is built by G85, F90, and R154.

It belongs to the methyltransferase superfamily. RNA methyltransferase RsmG family.

Its subcellular location is the cytoplasm. The catalysed reaction is guanosine(527) in 16S rRNA + S-adenosyl-L-methionine = N(7)-methylguanosine(527) in 16S rRNA + S-adenosyl-L-homocysteine. Functionally, specifically methylates the N7 position of guanine in position 527 of 16S rRNA. In Rhodopseudomonas palustris (strain ATCC BAA-98 / CGA009), this protein is Ribosomal RNA small subunit methyltransferase G.